A 344-amino-acid polypeptide reads, in one-letter code: MIEIRNLSQRFEGPRGWIEALHNVNLTIPQGEVFGIIGRSGAGKSTLVRTINLLTRPSEGNVFVDGRDLTQLSAGELRGARRDIGMIFQHFNLLSSRTVFGNVALPLELAGVKRAEIEATVLPLLDLVGLAAQKDRYPAQISGGQKQRVGIARALASKPKVLLSDEATSALDPETTRAILDLLRRINRELGLTIVLITHQMEVIKDVCDRVAVLDAGRVVEEGNVIDVFMRPHHEVTRALIGDVIAQELPPAMKARVAERLKTGSGHLLRLAFTGSGVDQPILSETIRRYELDFNILHGQIDEIQGRAFGSLAVLATGEPGKVGQAFAYLREQGVVVEELSYVE.

An ABC transporter domain is found at 2 to 241 (IEIRNLSQRF…PHHEVTRALI (240 aa)). Residue 38–45 (GRSGAGKS) participates in ATP binding.

The protein belongs to the ABC transporter superfamily. Methionine importer (TC 3.A.1.24) family. In terms of assembly, the complex is composed of two ATP-binding proteins (MetN), two transmembrane proteins (MetI) and a solute-binding protein (MetQ).

It localises to the cell inner membrane. It carries out the reaction L-methionine(out) + ATP + H2O = L-methionine(in) + ADP + phosphate + H(+). The catalysed reaction is D-methionine(out) + ATP + H2O = D-methionine(in) + ADP + phosphate + H(+). Functionally, part of the ABC transporter complex MetNIQ involved in methionine import. Responsible for energy coupling to the transport system. This chain is Methionine import ATP-binding protein MetN, found in Burkholderia thailandensis (strain ATCC 700388 / DSM 13276 / CCUG 48851 / CIP 106301 / E264).